The following is a 1373-amino-acid chain: DNA-directed RNA polymerase subunit beta (1373 aa).

This sequence belongs to the RNA polymerase beta chain family. In terms of assembly, the RNAP catalytic core consists of 2 alpha, 1 beta, 1 beta' and 1 omega subunit. When a sigma factor is associated with the core the holoenzyme is formed, which can initiate transcription.

It carries out the reaction RNA(n) + a ribonucleoside 5'-triphosphate = RNA(n+1) + diphosphate. Its function is as follows. DNA-dependent RNA polymerase catalyzes the transcription of DNA into RNA using the four ribonucleoside triphosphates as substrates. The sequence is that of DNA-directed RNA polymerase subunit beta from Rickettsia akari (strain Hartford).